A 102-amino-acid chain; its full sequence is MDTVRLSHLVLQEGINHTMALWKFQAFELFTDHLNPEMCLSRDISLYTSMALMLVRIVVEAKRKVLVIWKAAFQSLQDGTCHGTICAHCSLEHYSLSTFVCC.

This is an uncharacterized protein from Saccharomyces cerevisiae (strain ATCC 204508 / S288c) (Baker's yeast).